Here is a 72-residue protein sequence, read N- to C-terminus: DNA-directed RNA polymerase subunit omega (72 aa).

It belongs to the RNA polymerase subunit omega family. The RNAP catalytic core consists of 2 alpha, 1 beta, 1 beta' and 1 omega subunit. When a sigma factor is associated with the core the holoenzyme is formed, which can initiate transcription.

It carries out the reaction RNA(n) + a ribonucleoside 5'-triphosphate = RNA(n+1) + diphosphate. Its function is as follows. Promotes RNA polymerase assembly. Latches the N- and C-terminal regions of the beta' subunit thereby facilitating its interaction with the beta and alpha subunits. The protein is DNA-directed RNA polymerase subunit omega of Staphylococcus aureus (strain Mu3 / ATCC 700698).